Reading from the N-terminus, the 557-residue chain is Leucine-rich glioma-inactivated protein 1 (557 aa).

The first 34 residues, 1–34, serve as a signal peptide directing secretion; that stretch reads MESESSRRMGNACIPLKRIAYFLCLFSVVLLTEG. An LRRNT domain is found at 35–72; that stretch reads KKPAKPKCPAVCTCSKDNALCENARSIPRTVPPDVISL. LRR repeat units follow at residues 92-113, 116-137, and 140-161; these read SLQLLLFTSNSFDVISDDAFIG, HLEYLFIENNNIKSISRHTFRG, and SLIHLSLANNNLQTLPKDIFKG. The region spanning 173–223 is the LRRCT domain; it reads NAFNCDCKLKWLVEWLGHTNATVEDIYCEGPPEYKKRKINSLSPKDFDCII. A glycan (N-linked (GlcNAc...) asparagine) is linked at asparagine 192. EAR repeat units follow at residues 225 to 267, 271 to 313, 317 to 364, 366 to 415, 419 to 462, 464 to 506, and 510 to 552; these read EFAK…EWDH, TFRN…KRDG, KFIK…KWNG, GFYS…QWSK, LFTN…KWGG, SFQD…NWDA, and KFVK…KHVI. Asparagine 277 carries an N-linked (GlcNAc...) asparagine glycan. A glycan (N-linked (GlcNAc...) asparagine) is linked at asparagine 422.

As to quaternary structure, oligomer. Interacts with KCNA1 within a complex containing KCNA1, KCNA4 and KCNAB1. Part of a complex containing ADAM22, DLG4/PSD95 and CACNG2 (stargazin). Can bind to ADAM11 and ADAM23. In terms of processing, glycosylated. In terms of tissue distribution, expressed in the brain (at protein level). Expressed in cerebellar cortex basket cell terminals (at protein level). Highly expressed in the dentate gyrus and CA3 field of the hippocampus.

It localises to the secreted. Its subcellular location is the synapse. It is found in the cytoplasm. The protein resides in the golgi apparatus. The protein localises to the endoplasmic reticulum. Regulates voltage-gated potassium channels assembled from KCNA1, KCNA4 and KCNAB1. It slows down channel inactivation by precluding channel closure mediated by the KCNAB1 subunit. Ligand for ADAM22 that positively regulates synaptic transmission mediated by AMPA-type glutamate receptors. Plays a role in suppressing the production of MMP1/3 through the phosphatidylinositol 3-kinase/ERK pathway. This is Leucine-rich glioma-inactivated protein 1 from Mus musculus (Mouse).